A 110-amino-acid polypeptide reads, in one-letter code: UPF0060 membrane protein Bcep1808_1236 (110 aa).

The next 3 membrane-spanning stretches (helical) occupy residues 9-29, 34-54, and 66-86; these read ALFA…WLVL, PVWL…LLTL, and YGGV…GVAL.

The protein belongs to the UPF0060 family.

The protein localises to the cell inner membrane. The protein is UPF0060 membrane protein Bcep1808_1236 of Burkholderia vietnamiensis (strain G4 / LMG 22486) (Burkholderia cepacia (strain R1808)).